The sequence spans 150 residues: Putative FAD-linked sulfhydryl oxidase 088R (150 aa).

Residues 24–128 enclose the ERV/ALR sulfhydryl oxidase domain; that stretch reads GPFGPSGFGP…VTLQKAICIY (105 aa). Cysteine 74 and cysteine 77 are oxidised to a cystine.

FAD is required as a cofactor.

It catalyses the reaction 2 R'C(R)SH + O2 = R'C(R)S-S(R)CR' + H2O2. Its function is as follows. FAD-dependent sulfhydryl oxidase that catalyzes disulfide bond formation. The protein is Putative FAD-linked sulfhydryl oxidase 088R of Dryophytes versicolor (chameleon treefrog).